A 393-amino-acid polypeptide reads, in one-letter code: uncharacterized protein (393 aa).

8 helical membrane passes run 15-35, 56-76, 86-106, 131-151, 176-196, 253-273, 289-309, and 349-369; these read IVAFSFFLVFLIVISVIVTIF, WGWIFVVILGFLVSVLWNVII, FYASWWEWLLFGFVVQFFQIV, AVLIVTSTGAFWNLSQALITW, LSLTGMIFDVVVAILFIVIAF, LLANMVVAIVSYFSLFGVFMI, LIDLFNITNIAVTASNFIPVA, and VYLPAIFTGICFVVWIVQVIW.

The protein localises to the cell membrane. This is an uncharacterized protein from Mycoplasma genitalium (strain ATCC 33530 / DSM 19775 / NCTC 10195 / G37) (Mycoplasmoides genitalium).